A 241-amino-acid polypeptide reads, in one-letter code: 3-deoxy-D-manno-octulosonic acid kinase (241 aa).

D171 is an active-site residue.

This sequence belongs to the protein kinase superfamily. KdkA/RfaP family.

The protein resides in the cell inner membrane. The catalysed reaction is an alpha-Kdo-(2-&gt;6)-lipid IVA + ATP = a 4-O-phospho-alpha-Kdo-(2-&gt;6)-lipid IVA + ADP + H(+). The protein operates within bacterial outer membrane biogenesis; LPS core biosynthesis. Its function is as follows. Catalyzes the ATP-dependent phosphorylation of the 3-deoxy-D-manno-octulosonic acid (Kdo) residue in Kdo-lipid IV(A) at the 4-OH position. This is 3-deoxy-D-manno-octulosonic acid kinase from Haemophilus influenzae (strain PittGG).